Here is a 96-residue protein sequence, read N- to C-terminus: UPF0235 protein YggU (96 aa).

It belongs to the UPF0235 family.

This chain is UPF0235 protein YggU, found in Escherichia coli O127:H6 (strain E2348/69 / EPEC).